Here is a 282-residue protein sequence, read N- to C-terminus: MAGPPNKKQKREDYRTARENGEESKELPKKKFYRQRAHANPFSDHRLAYPASPAQMDWASHYPAYAESAAASEGTEEPSTGSDSSSLKKLKQDVEVADIGCGFGGLTVALAPKLPNSLILGMEIRAQVTEYVQERIKALRVQEKESGLFQNASCIRANTMKFMPNFFKKHQLSKIFLCFPDPHFKARKHKARIVSTTLAAEYAYVVRPGGIIYTITDVEDLHNWMVTHFNAHPTFERVAEEEQEADECVNIMRTETEEGKKVTRNNGPKFVALFKRLEDPPW.

The segment at 1 to 36 (MAGPPNKKQKREDYRTARENGEESKELPKKKFYRQR) is disordered. Basic and acidic residues predominate over residues 10 to 29 (KREDYRTARENGEESKELPK). Residues glycine 100, 123–124 (EI), 158–159 (NT), and cysteine 178 contribute to the S-adenosyl-L-methionine site. The active site involves aspartate 181. Position 256-258 (256-258 (TEE)) interacts with S-adenosyl-L-methionine.

The protein belongs to the class I-like SAM-binding methyltransferase superfamily. TrmB family. Forms a complex with trm82.

It is found in the nucleus. It catalyses the reaction guanosine(46) in tRNA + S-adenosyl-L-methionine = N(7)-methylguanosine(46) in tRNA + S-adenosyl-L-homocysteine. It functions in the pathway tRNA modification; N(7)-methylguanine-tRNA biosynthesis. In terms of biological role, catalyzes the formation of N(7)-methylguanine at position 46 (m7G46) in tRNA. This Botryotinia fuckeliana (strain B05.10) (Noble rot fungus) protein is tRNA (guanine-N(7)-)-methyltransferase (trm8).